We begin with the raw amino-acid sequence, 275 residues long: 2,3,4,5-tetrahydropyridine-2,6-dicarboxylate N-succinyltransferase (275 aa).

2 residues coordinate substrate: Arg106 and Asp143.

The protein belongs to the transferase hexapeptide repeat family. As to quaternary structure, homotrimer.

Its subcellular location is the cytoplasm. It catalyses the reaction (S)-2,3,4,5-tetrahydrodipicolinate + succinyl-CoA + H2O = (S)-2-succinylamino-6-oxoheptanedioate + CoA. It participates in amino-acid biosynthesis; L-lysine biosynthesis via DAP pathway; LL-2,6-diaminopimelate from (S)-tetrahydrodipicolinate (succinylase route): step 1/3. This Cupriavidus pinatubonensis (strain JMP 134 / LMG 1197) (Cupriavidus necator (strain JMP 134)) protein is 2,3,4,5-tetrahydropyridine-2,6-dicarboxylate N-succinyltransferase.